Reading from the N-terminus, the 703-residue chain is Calcium-responsive transcription factor (703 aa).

3 disordered regions span residues 1–61, 130–150, and 517–539; these read MEQS…QNIP, GPLV…SDRN, and GNSQ…SLSP. Residues 9–22 show a composition bias toward basic and acidic residues; the sequence is KVNHNDSEESKTDS. The span at 23-34 shows a compositional bias: polar residues; sequence QHLTYMDSSEPS.

The protein resides in the nucleus. Functionally, acts as a transcriptional activator that mediates the calcium- and neuron-selective induction of BDNF exon III transcription. Binds to the consensus calcium-response element CaRE1 5'-CTATTTCGAG-3' sequence. The chain is Calcium-responsive transcription factor (CARF) from Bos taurus (Bovine).